The sequence spans 209 residues: Large ribosomal subunit protein bL25 (209 aa).

Belongs to the bacterial ribosomal protein bL25 family. CTC subfamily. As to quaternary structure, part of the 50S ribosomal subunit; part of the 5S rRNA/L5/L18/L25 subcomplex. Contacts the 5S rRNA. Binds to the 5S rRNA independently of L5 and L18.

This is one of the proteins that binds to the 5S RNA in the ribosome where it forms part of the central protuberance. The sequence is that of Large ribosomal subunit protein bL25 from Xanthomonas campestris pv. campestris (strain B100).